Here is a 92-residue protein sequence, read N- to C-terminus: Alpha-defensin 25 (92 aa).

An N-terminal signal peptide occupies residues 1–19; sequence MKTLVLLSALALLAFQVQA. The propeptide occupies 20 to 57; it reads DPIQNRDEESKIDEQPGKEDQAVSVSFGDPEGSSLQEE. Residues 24–40 are compositionally biased toward basic and acidic residues; sequence NRDEESKIDEQPGKEDQ. Positions 24-53 are disordered; it reads NRDEESKIDEQPGKEDQAVSVSFGDPEGSS. Intrachain disulfides connect Cys63/Cys92, Cys65/Cys80, and Cys70/Cys91.

This sequence belongs to the alpha-defensin family.

It is found in the secreted. May have microbicidal activities. The sequence is that of Alpha-defensin 25 (Defa25) from Mus musculus (Mouse).